The chain runs to 76 residues: Sulfur carrier protein TusA (76 aa).

The active-site Cysteine persulfide intermediate is the Cys-14.

Belongs to the sulfur carrier protein TusA family. In terms of assembly, interacts with IscS.

It localises to the cytoplasm. Its pathway is tRNA modification. Sulfur carrier protein involved in sulfur trafficking in the cell. Part of a sulfur-relay system required for 2-thiolation during synthesis of 2-thiouridine of the modified wobble base 5-methylaminomethyl-2-thiouridine (mnm(5)s(2)U) in tRNA. Interacts with IscS and stimulates its cysteine desulfurase activity. Accepts an activated sulfur from IscS, which is then transferred to TusD, and thus determines the direction of sulfur flow from IscS to 2-thiouridine formation. Also appears to be involved in sulfur transfer for the biosynthesis of molybdopterin. This is Sulfur carrier protein TusA from Buchnera aphidicola subsp. Acyrthosiphon pisum (strain 5A).